A 305-amino-acid polypeptide reads, in one-letter code: Undecaprenyl-diphosphatase (305 aa).

Transmembrane regions (helical) follow at residues 18–38 (GVTE…PALV), 55–75 (YLAF…VFFW), 103–123 (WLIV…EQLF), 130–150 (PVPA…GEVL), 187–207 (GVLI…RSGI), 225–245 (FSFL…IPEL), 246–266 (FGPL…ASFV), and 284–304 (LTPF…WLAL).

The protein belongs to the UppP family.

The protein localises to the cell membrane. It carries out the reaction di-trans,octa-cis-undecaprenyl diphosphate + H2O = di-trans,octa-cis-undecaprenyl phosphate + phosphate + H(+). In terms of biological role, catalyzes the dephosphorylation of undecaprenyl diphosphate (UPP). Confers resistance to bacitracin. The sequence is that of Undecaprenyl-diphosphatase from Mycobacterium avium (strain 104).